We begin with the raw amino-acid sequence, 161 residues long: Probable cell wall elongation regulator TseB (161 aa).

The Cytoplasmic portion of the chain corresponds to 1–5 (MRKKA). A helical transmembrane segment spans residues 6–26 (LIFTVIFGIIFLAVLLVSASI). Residues 27 to 161 (YKSAMAQKEE…TGKILKNITP (135 aa)) lie on the Extracellular side of the membrane.

Interacts with the penicillin-binding protein PBP2A, a monofunctional transpeptidase.

It localises to the cell membrane. In terms of biological role, required for normal cell shape. Plays an important role in cell wall elongation during exponential phase and spore outgrowth. Probably regulates the activity of the penicillin-binding protein PBP2A through a direct interaction. Not required for PBP2A activity, stability and localization. In Bacillus subtilis (strain 168), this protein is Probable cell wall elongation regulator TseB.